The sequence spans 126 residues: MARIAGIDLPREKRVEIALTYIYGIGLTRSKEILARTGVSPDTRVKNLSEAEQSTLREAIEKTYKVEGDLRNEVGQNIKRLMDIGAYRGLRHRRGLPVRGQRTKTNARTRKGPKKTVAGKKKATRK.

The tract at residues 92-126 (HRRGLPVRGQRTKTNARTRKGPKKTVAGKKKATRK) is disordered.

It belongs to the universal ribosomal protein uS13 family. Part of the 30S ribosomal subunit. Forms a loose heterodimer with protein S19. Forms two bridges to the 50S subunit in the 70S ribosome.

Functionally, located at the top of the head of the 30S subunit, it contacts several helices of the 16S rRNA. In the 70S ribosome it contacts the 23S rRNA (bridge B1a) and protein L5 of the 50S subunit (bridge B1b), connecting the 2 subunits; these bridges are implicated in subunit movement. Contacts the tRNAs in the A and P-sites. This chain is Small ribosomal subunit protein uS13, found in Deinococcus radiodurans (strain ATCC 13939 / DSM 20539 / JCM 16871 / CCUG 27074 / LMG 4051 / NBRC 15346 / NCIMB 9279 / VKM B-1422 / R1).